Here is a 415-residue protein sequence, read N- to C-terminus: Heterogeneous nuclear ribonucleoprotein F (415 aa).

Methionine 1 is modified (N-acetylmethionine). Residue methionine 2 is modified to N-acetylmethionine; in Heterogeneous nuclear ribonucleoprotein F, N-terminally processed. The 73-residue stretch at 13–85 folds into the RRM 1 domain; it reads VKLRGLPWSC…ESMGHRYIEV (73 aa). Lysine 72 is covalently cross-linked (Glycyl lysine isopeptide (Lys-Gly) (interchain with G-Cter in SUMO)). Residues 81–86 form an interaction with RNA region; that stretch reads RYIEVF. A Glycyl lysine isopeptide (Lys-Gly) (interchain with G-Cter in SUMO2) cross-link involves residue lysine 87. Phosphoserine is present on residues serine 104, serine 107, and serine 161. Residues 111-188 form the RRM 2 domain; it reads GFVRLRGLPF…RYIEVFKSSQ (78 aa). Lysine 167 participates in a covalent cross-link: Glycyl lysine isopeptide (Lys-Gly) (interchain with G-Cter in SUMO2). Positions 179-184 are interaction with RNA; it reads RYIEVF. A Glycyl lysine isopeptide (Lys-Gly) (interchain with G-Cter in SUMO2) cross-link involves residue lysine 185. Phosphoserine is present on residues serine 187, serine 193, and serine 195. Lysine 200 is subject to N6-acetyllysine; alternate. Residue lysine 200 forms a Glycyl lysine isopeptide (Lys-Gly) (interchain with G-Cter in SUMO2); alternate linkage. Threonine 215 carries the phosphothreonine modification. Lysine 224 carries the post-translational modification N6-acetyllysine; alternate. Lysine 224 participates in a covalent cross-link: Glycyl lysine isopeptide (Lys-Gly) (interchain with G-Cter in SUMO2); alternate. Phosphoserine is present on serine 265. The region spanning 289-366 is the RRM 3 domain; sequence HCVHMRGLPY…IELFLNSTTG (78 aa). Residues 355 to 360 are interaction with RNA; it reads RYIELF.

As to quaternary structure, identified in the spliceosome C complex. Interacts with AGO1, AGO2, TBP and TXNL4/DIM1. In terms of processing, sumoylated.

The protein localises to the nucleus. It localises to the nucleoplasm. Its function is as follows. Component of the heterogeneous nuclear ribonucleoprotein (hnRNP) complexes which provide the substrate for the processing events that pre-mRNAs undergo before becoming functional, translatable mRNAs in the cytoplasm. Plays a role in the regulation of alternative splicing events. Binds G-rich sequences in pre-mRNAs and keeps target RNA in an unfolded state. This Macaca fascicularis (Crab-eating macaque) protein is Heterogeneous nuclear ribonucleoprotein F (HNRNPF).